Here is a 347-residue protein sequence, read N- to C-terminus: GMP reductase (347 aa).

Residue 108–131 (ADFQKTKDIMALTEDLIFICIDIA) coordinates NADP(+). K(+)-binding residues include glycine 181 and glycine 183. The active-site Thioimidate intermediate is cysteine 186. 216–239 (IIGDGGCSCAGDVSKAFGGGADFV) serves as a coordination point for NADP(+).

Belongs to the IMPDH/GMPR family. GuaC type 1 subfamily. Homotetramer.

The catalysed reaction is IMP + NH4(+) + NADP(+) = GMP + NADPH + 2 H(+). Functionally, catalyzes the irreversible NADPH-dependent deamination of GMP to IMP. It functions in the conversion of nucleobase, nucleoside and nucleotide derivatives of G to A nucleotides, and in maintaining the intracellular balance of A and G nucleotides. The chain is GMP reductase from Photobacterium profundum (strain SS9).